Reading from the N-terminus, the 100-residue chain is Urease subunit gamma (100 aa).

Belongs to the urease gamma subunit family. In terms of assembly, heterotrimer of UreA (gamma), UreB (beta) and UreC (alpha) subunits. Three heterotrimers associate to form the active enzyme.

Its subcellular location is the cytoplasm. The catalysed reaction is urea + 2 H2O + H(+) = hydrogencarbonate + 2 NH4(+). The protein operates within nitrogen metabolism; urea degradation; CO(2) and NH(3) from urea (urease route): step 1/1. This chain is Urease subunit gamma, found in Sinorhizobium fredii (strain NBRC 101917 / NGR234).